The sequence spans 274 residues: Kit ligand (274 aa).

A signal peptide spans 1-25 (MKKTQTWIITCIYLQLLLFNPLVKT). Residues 26–215 (KGICENRVTD…SNFTGDSNLQ (190 aa)) lie on the Extracellular side of the membrane. Disulfide bonds link Cys29-Cys114 and Cys68-Cys164. Residues Asn90, Asn97, Asn145, Asn196, and Asn207 are each glycosylated (N-linked (GlcNAc...) asparagine). A helical membrane pass occupies residues 216-238 (WAAMALPAFFSLVIGFAFGALYW). The Cytoplasmic portion of the chain corresponds to 239–274 (KKKQPNLTRAVENIQINEEDNEISMLQEKEREFQEV).

This sequence belongs to the SCF family. As to quaternary structure, homodimer, non-covalently linked. In terms of processing, a soluble form is produced by proteolytic processing of the extracellular domain.

It localises to the cytoplasm. Its subcellular location is the cytoskeleton. The protein resides in the cell membrane. The protein localises to the cell projection. It is found in the lamellipodium. It localises to the filopodium. Its subcellular location is the secreted. In terms of biological role, stimulates the proliferation of mast cells. Able to augment the proliferation of both myeloid and lymphoid hematopoietic progenitors in bone marrow culture. Also mediates cell-cell adhesion. Acts synergistically with other cytokines, probably interleukins. This Equus caballus (Horse) protein is Kit ligand (KITLG).